The primary structure comprises 99 residues: Malonate decarboxylase acyl carrier protein (99 aa).

Position 25 is an O-(phosphoribosyl dephospho-coenzyme A)serine (Ser-25).

Belongs to the MdcC family. In terms of processing, covalently binds the prosthetic group of malonate decarboxylase.

Its subcellular location is the cytoplasm. Its function is as follows. Subunit of malonate decarboxylase, it is an acyl carrier protein to which acetyl and malonyl thioester residues are bound via a 2'-(5''-phosphoribosyl)-3'-dephospho-CoA prosthetic group and turn over during the catalytic mechanism. This Pseudomonas putida (Arthrobacter siderocapsulatus) protein is Malonate decarboxylase acyl carrier protein.